Here is a 61-residue protein sequence, read N- to C-terminus: Large ribosomal subunit protein uL30 (61 aa).

Belongs to the universal ribosomal protein uL30 family. As to quaternary structure, part of the 50S ribosomal subunit.

This is Large ribosomal subunit protein uL30 from Chlorobium phaeobacteroides (strain BS1).